A 61-amino-acid chain; its full sequence is Large ribosomal subunit protein bL32 (61 aa).

Basic residues predominate over residues 1 to 16 (MAVPKRKTSPSRRGMR). Positions 1-44 (MAVPKRKTSPSRRGMRRSADALKAPTYVEDKDSGELRRPHHIDL) are disordered. The span at 28-44 (VEDKDSGELRRPHHIDL) shows a compositional bias: basic and acidic residues.

This sequence belongs to the bacterial ribosomal protein bL32 family.

The sequence is that of Large ribosomal subunit protein bL32 from Methylobacterium nodulans (strain LMG 21967 / CNCM I-2342 / ORS 2060).